The primary structure comprises 119 residues: Urease subunit beta (119 aa).

The protein belongs to the urease beta subunit family. Heterotrimer of UreA (gamma), UreB (beta) and UreC (alpha) subunits. Three heterotrimers associate to form the active enzyme.

The protein localises to the cytoplasm. The enzyme catalyses urea + 2 H2O + H(+) = hydrogencarbonate + 2 NH4(+). Its pathway is nitrogen metabolism; urea degradation; CO(2) and NH(3) from urea (urease route): step 1/1. The chain is Urease subunit beta from Tolumonas auensis (strain DSM 9187 / NBRC 110442 / TA 4).